A 322-amino-acid chain; its full sequence is 2-methylene-furan-3-one reductase (322 aa).

NADP(+) contacts are provided by residues K59, 174-175 (GV), 197-200 (STKK), Y215, I253, 264-266 (FVL), 311-312 (RA), and 311-322 (RATGKVVVYPIP). Substrate is bound at residue K59.

The protein belongs to the zinc-containing alcohol dehydrogenase family. Quinone oxidoreductase subfamily. In terms of assembly, monomer. In terms of processing, the N-terminus is blocked.

The enzyme catalyses 4-hydroxy-2,5-dimethyl-furan-3(2H)-one + NADP(+) = 4-hydroxy-5-methyl-2-methylenefuran-3(2H)-one + NADPH + H(+). Enone oxidoreductase involved in the biosynthesis of 4-hydroxy-2,5-dimethyl-3(2H)-furanone (HDMF or furaneol), the key flavor compound in strawberries. Can use both NADH and NADPH as the electron donor. The polypeptide is 2-methylene-furan-3-one reductase (EO) (Fragaria ananassa (Strawberry)).